Reading from the N-terminus, the 132-residue chain is Small ribosomal subunit protein uS8 (132 aa).

Belongs to the universal ribosomal protein uS8 family. As to quaternary structure, part of the 30S ribosomal subunit. Contacts proteins S5 and S12.

In terms of biological role, one of the primary rRNA binding proteins, it binds directly to 16S rRNA central domain where it helps coordinate assembly of the platform of the 30S subunit. The protein is Small ribosomal subunit protein uS8 of Mesorhizobium japonicum (strain LMG 29417 / CECT 9101 / MAFF 303099) (Mesorhizobium loti (strain MAFF 303099)).